Reading from the N-terminus, the 1404-residue chain is DNA-directed RNA polymerase subunit beta' (1404 aa).

4 residues coordinate Zn(2+): Cys70, Cys72, Cys85, and Cys88. Positions 460, 462, and 464 each coordinate Mg(2+). Cys814, Cys888, Cys895, and Cys898 together coordinate Zn(2+).

The protein belongs to the RNA polymerase beta' chain family. In terms of assembly, the RNAP catalytic core consists of 2 alpha, 1 beta, 1 beta' and 1 omega subunit. When a sigma factor is associated with the core the holoenzyme is formed, which can initiate transcription. Mg(2+) is required as a cofactor. Zn(2+) serves as cofactor.

The catalysed reaction is RNA(n) + a ribonucleoside 5'-triphosphate = RNA(n+1) + diphosphate. In terms of biological role, DNA-dependent RNA polymerase catalyzes the transcription of DNA into RNA using the four ribonucleoside triphosphates as substrates. The sequence is that of DNA-directed RNA polymerase subunit beta' from Shewanella piezotolerans (strain WP3 / JCM 13877).